A 583-amino-acid polypeptide reads, in one-letter code: Isocitrate dehydrogenase kinase/phosphatase (583 aa).

ATP is bound by residues 315–321 (APGIRGM) and Lys336. Asp371 is a catalytic residue.

It belongs to the AceK family.

It is found in the cytoplasm. It carries out the reaction L-seryl-[isocitrate dehydrogenase] + ATP = O-phospho-L-seryl-[isocitrate dehydrogenase] + ADP + H(+). In terms of biological role, bifunctional enzyme which can phosphorylate or dephosphorylate isocitrate dehydrogenase (IDH) on a specific serine residue. This is a regulatory mechanism which enables bacteria to bypass the Krebs cycle via the glyoxylate shunt in response to the source of carbon. When bacteria are grown on glucose, IDH is fully active and unphosphorylated, but when grown on acetate or ethanol, the activity of IDH declines drastically concomitant with its phosphorylation. This is Isocitrate dehydrogenase kinase/phosphatase from Salmonella paratyphi C (strain RKS4594).